The chain runs to 722 residues: Polyribonucleotide nucleotidyltransferase (722 aa).

2 residues coordinate Mg(2+): Asp-495 and Asp-501. The region spanning 562 to 621 (PRLLSFRIDPELIGTVIGPGGRTIKGITERTNTKIDIEDGGIVTIASHDGAAAEEAQRII) is the KH domain. An S1 motif domain is found at 631–699 (GEIFPGSITR…NRGRINLTLR (69 aa)). The tract at residues 700–722 (GVSQNGGMSNYPEPTPTPVAPLT) is disordered. The span at 712-722 (EPTPTPVAPLT) shows a compositional bias: pro residues.

Belongs to the polyribonucleotide nucleotidyltransferase family. Mg(2+) serves as cofactor.

Its subcellular location is the cytoplasm. The catalysed reaction is RNA(n+1) + phosphate = RNA(n) + a ribonucleoside 5'-diphosphate. Involved in mRNA degradation. Catalyzes the phosphorolysis of single-stranded polyribonucleotides processively in the 3'- to 5'-direction. This chain is Polyribonucleotide nucleotidyltransferase, found in Prochlorococcus marinus (strain NATL2A).